A 189-amino-acid polypeptide reads, in one-letter code: Segregation and condensation protein B (189 aa).

Belongs to the ScpB family. As to quaternary structure, homodimer. Homodimerization may be required to stabilize the binding of ScpA to the Smc head domains. Component of a cohesin-like complex composed of ScpA, ScpB and the Smc homodimer, in which ScpA and ScpB bind to the head domain of Smc. The presence of the three proteins is required for the association of the complex with DNA.

The protein resides in the cytoplasm. In terms of biological role, participates in chromosomal partition during cell division. May act via the formation of a condensin-like complex containing Smc and ScpA that pull DNA away from mid-cell into both cell halves. In Streptococcus pneumoniae serotype 19F (strain G54), this protein is Segregation and condensation protein B.